We begin with the raw amino-acid sequence, 245 residues long: 4-hydroxy-tetrahydrodipicolinate reductase (245 aa).

NAD(+) is bound by residues 7–12 (GARGKV), 75–77 (GTT), and 102–105 (APNF). Histidine 132 serves as the catalytic Proton donor/acceptor. Histidine 133 is a binding site for (S)-2,3,4,5-tetrahydrodipicolinate. Lysine 136 functions as the Proton donor in the catalytic mechanism. 142 to 143 (GT) lines the (S)-2,3,4,5-tetrahydrodipicolinate pocket.

The protein belongs to the DapB family.

Its subcellular location is the cytoplasm. The enzyme catalyses (S)-2,3,4,5-tetrahydrodipicolinate + NAD(+) + H2O = (2S,4S)-4-hydroxy-2,3,4,5-tetrahydrodipicolinate + NADH + H(+). It carries out the reaction (S)-2,3,4,5-tetrahydrodipicolinate + NADP(+) + H2O = (2S,4S)-4-hydroxy-2,3,4,5-tetrahydrodipicolinate + NADPH + H(+). The protein operates within amino-acid biosynthesis; L-lysine biosynthesis via DAP pathway; (S)-tetrahydrodipicolinate from L-aspartate: step 4/4. Functionally, catalyzes the conversion of 4-hydroxy-tetrahydrodipicolinate (HTPA) to tetrahydrodipicolinate. This is 4-hydroxy-tetrahydrodipicolinate reductase from Mycolicibacterium smegmatis (strain ATCC 700084 / mc(2)155) (Mycobacterium smegmatis).